The primary structure comprises 369 residues: GTPase Obg (369 aa).

The Obg domain occupies 1–159 (MKFIDEARIE…RMLKLELKVL (159 aa)). The interval 128 to 147 (LHFKSSTNRAPRQKTDGKPG) is disordered. An OBG-type G domain is found at 160–334 (ADVGLLGMPN…LCYAIYDYLA (175 aa)). Residues 166 to 173 (GMPNAGKS), 191 to 195 (FTTLA), 213 to 216 (DIPG), 284 to 287 (NKLD), and 315 to 317 (SAL) contribute to the GTP site. Mg(2+) contacts are provided by Ser-173 and Thr-193.

This sequence belongs to the TRAFAC class OBG-HflX-like GTPase superfamily. OBG GTPase family. As to quaternary structure, monomer. Requires Mg(2+) as cofactor.

Its subcellular location is the cytoplasm. Its function is as follows. An essential GTPase which binds GTP, GDP and possibly (p)ppGpp with moderate affinity, with high nucleotide exchange rates and a fairly low GTP hydrolysis rate. Plays a role in control of the cell cycle, stress response, ribosome biogenesis and in those bacteria that undergo differentiation, in morphogenesis control. This Burkholderia multivorans (strain ATCC 17616 / 249) protein is GTPase Obg.